A 428-amino-acid chain; its full sequence is Histidinol dehydrogenase (428 aa).

3 residues coordinate NAD(+): Tyr-126, Gln-188, and Asn-211. Ser-234, Gln-256, and His-259 together coordinate substrate. Zn(2+)-binding residues include Gln-256 and His-259. Catalysis depends on proton acceptor residues Glu-324 and His-325. The substrate site is built by His-325, Asp-358, Glu-412, and His-417. Position 358 (Asp-358) interacts with Zn(2+). His-417 is a Zn(2+) binding site.

This sequence belongs to the histidinol dehydrogenase family. It depends on Zn(2+) as a cofactor.

The catalysed reaction is L-histidinol + 2 NAD(+) + H2O = L-histidine + 2 NADH + 3 H(+). Its pathway is amino-acid biosynthesis; L-histidine biosynthesis; L-histidine from 5-phospho-alpha-D-ribose 1-diphosphate: step 9/9. Its function is as follows. Catalyzes the sequential NAD-dependent oxidations of L-histidinol to L-histidinaldehyde and then to L-histidine. This chain is Histidinol dehydrogenase, found in Chlorobium chlorochromatii (strain CaD3).